The sequence spans 905 residues: Alanine--tRNA ligase (905 aa).

The Zn(2+) site is built by histidine 582, histidine 586, cysteine 687, and histidine 691.

The protein belongs to the class-II aminoacyl-tRNA synthetase family. The cofactor is Zn(2+).

Its subcellular location is the cytoplasm. It carries out the reaction tRNA(Ala) + L-alanine + ATP = L-alanyl-tRNA(Ala) + AMP + diphosphate. Functionally, catalyzes the attachment of alanine to tRNA(Ala) in a two-step reaction: alanine is first activated by ATP to form Ala-AMP and then transferred to the acceptor end of tRNA(Ala). Also edits incorrectly charged Ser-tRNA(Ala) and Gly-tRNA(Ala) via its editing domain. This Mycoplasma mobile (strain ATCC 43663 / 163K / NCTC 11711) (Mesomycoplasma mobile) protein is Alanine--tRNA ligase.